A 2885-amino-acid polypeptide reads, in one-letter code: E3 ubiquitin-protein ligase hyd (2885 aa).

A disordered region spans residues 83–138; sequence SDAKCSTSGGSGTASASKAPSSSRPMARSRARLLRATGRSNSTGQGSGSRSTGVII. 2 stretches are compositionally biased toward low complexity: residues 95–108 and 116–138; these read TASA…SRPM and LRAT…GVII. The region spanning 154-196 is the UBA domain; sequence YVPEELISQAEVVLQGKSRNLIIRELQRTNLDVNLAVNNLLSR. Residues 266-276 show a composition bias toward low complexity; sequence ANANAADSNQS. Disordered regions lie at residues 266 to 291, 580 to 664, and 711 to 731; these read ANAN…TGNS, NNLN…GRKD, and AATS…KEDD. 2 stretches are compositionally biased toward polar residues: residues 277–291 and 598–615; these read TTRS…TGNS and AMPS…SNSK. S628 and S631 each carry phosphoserine. The segment covering 650–664 has biased composition (basic and acidic residues); the sequence is TTKEDSNAPQEGRKD. Residues 711-722 are compositionally biased toward low complexity; sequence AATSSTSNTAST. S967 bears the Phosphoserine mark. The segment covering 1008 to 1032 has biased composition (low complexity); it reads ASSSNENSSFATMSSSAAGSASSTS. The tract at residues 1008 to 1035 is disordered; sequence ASSSNENSSFATMSSSAAGSASSTSRDN. The UBR-type zinc finger occupies 1217–1285; it reads DTCSFTWTGA…EKCKCKALIA (69 aa). Position 1362 is a phosphoserine (S1362). Residues 1642-1761 are disordered; that stretch reads NEDGMQDDES…IRSRDTARSS (120 aa). Polar residues predominate over residues 1669–1681; that stretch reads NQSNQEVQRSVQA. The segment covering 1696–1721 has biased composition (acidic residues); that stretch reads LEDESGDSSAQEEDGSEDGESDDQSD. The segment covering 1735–1749 has biased composition (polar residues); that stretch reads TNSNARSDLAPQTMQ. Residue S2037 is modified to Phosphoserine. The tract at residues 2124–2143 is disordered; that stretch reads IDSSKTGDGNVTNKAEGSTD. S2183 bears the Phosphoserine mark. The disordered stretch occupies residues 2473-2492; the sequence is NLDARPYTPPNSSDNATPES. Residues 2482–2492 show a composition bias toward polar residues; it reads PNSSDNATPES. The PABC domain occupies 2484-2561; sequence SSDNATPESL…AIEIITFKQK (78 aa). S2574 bears the Phosphoserine mark. Residues 2782-2885 form the HECT domain; that stretch reads FNDESSEGPD…AIKSKNFGFV (104 aa). The active-site Glycyl thioester intermediate is the C2854.

Belongs to the UBR5 family.

Its subcellular location is the nucleus. It is found in the cytoplasm. It catalyses the reaction S-ubiquitinyl-[E2 ubiquitin-conjugating enzyme]-L-cysteine + [acceptor protein]-L-lysine = [E2 ubiquitin-conjugating enzyme]-L-cysteine + N(6)-ubiquitinyl-[acceptor protein]-L-lysine.. The protein operates within protein modification; protein ubiquitination. Its function is as follows. E3 ubiquitin-protein ligase which accepts ubiquitin from an E2 ubiquitin-conjugating enzyme in the form of a thioester and then directly transfers the ubiquitin to targeted substrate. Required for regulation of cell proliferation in imaginal disks and germ cells. Acts as a negative regulator of hh, ci and dpp expression in the anterior of the eye disk. Acts as a positive regulator of the canonical Wnt signaling pathway by mediating ubiquitination and degradation of gro. Catalyzes 'Lys-63'-linked polyubiquitination of akirin, thereby activating the immune deficiency pathway (Imd). This is E3 ubiquitin-protein ligase hyd (hyd) from Drosophila melanogaster (Fruit fly).